A 144-amino-acid polypeptide reads, in one-letter code: Ribosomal RNA large subunit methyltransferase H (144 aa).

S-adenosyl-L-methionine-binding positions include glycine 92 and 111–116 (LSPMTF).

The protein belongs to the RNA methyltransferase RlmH family. In terms of assembly, homodimer.

It localises to the cytoplasm. It carries out the reaction pseudouridine(1915) in 23S rRNA + S-adenosyl-L-methionine = N(3)-methylpseudouridine(1915) in 23S rRNA + S-adenosyl-L-homocysteine + H(+). Functionally, specifically methylates the pseudouridine at position 1915 (m3Psi1915) in 23S rRNA. In Synechococcus sp. (strain CC9311), this protein is Ribosomal RNA large subunit methyltransferase H.